The chain runs to 193 residues: MYNVFDEYSQKAKNEGYLARSVYKLIEIDKKFSLFSSGNILDIGASPGSFSQYAYANLKNGVLVAVDLNDVNLNFTSNFYFIKGNIYLDEVYQKIKIFSPYSLIVSDAAPSTTGNRLVDTSNSFNLNIRIFELACESLMRGGNLLIKVFQGGEEEQIFYKLKSCFRVVKKVRPKAVRKNSFEIYFLAKDFAKL.

Gly48, Phe50, Asp67, Asn85, and Asp107 together coordinate S-adenosyl-L-methionine. The active-site Proton acceptor is the Lys147.

It belongs to the class I-like SAM-binding methyltransferase superfamily. RNA methyltransferase RlmE family.

It is found in the cytoplasm. It catalyses the reaction uridine(2552) in 23S rRNA + S-adenosyl-L-methionine = 2'-O-methyluridine(2552) in 23S rRNA + S-adenosyl-L-homocysteine + H(+). In terms of biological role, specifically methylates the uridine in position 2552 of 23S rRNA at the 2'-O position of the ribose in the fully assembled 50S ribosomal subunit. This chain is Ribosomal RNA large subunit methyltransferase E, found in Borrelia duttonii (strain Ly).